The chain runs to 119 residues: MISKPDKNKTRQRRHARVRGKISGTSERPRLNIFRSNKNIYAQLIDDVAGVTLASASTLDKDIKDPENKTAASAQVGALIAKRAVADGHKVVVFDRGGYLYHGRVAALAEAARENGLEF.

The tract at residues 1–23 (MISKPDKNKTRQRRHARVRGKIS) is disordered. The segment covering 10 to 20 (TRQRRHARVRG) has biased composition (basic residues).

The protein belongs to the universal ribosomal protein uL18 family. Part of the 50S ribosomal subunit; part of the 5S rRNA/L5/L18/L25 subcomplex. Contacts the 5S and 23S rRNAs.

This is one of the proteins that bind and probably mediate the attachment of the 5S RNA into the large ribosomal subunit, where it forms part of the central protuberance. This is Large ribosomal subunit protein uL18 from Lacticaseibacillus casei (strain BL23) (Lactobacillus casei).